Consider the following 183-residue polypeptide: Capsid protein (183 aa).

Residues 136–183 form a disordered region; sequence NAPILSTLPETTVVRRRGRSPRRRTPSPRRRRSQSPRRRRSQSRESQC. Residues 149 to 176 show a composition bias toward basic residues; the sequence is VRRRGRSPRRRTPSPRRRRSQSPRRRRS. Phosphoserine; by host is present on residues S155, S162, and S170. The stretch at 155-161 is one 1; half-length repeat; sequence SPRRRTP. The tract at residues 155-177 is 3 X 8 AA repeats of S-P-R-R-R-[PR]-S-Q; the sequence is SPRRRTPSPRRRRSQSPRRRRSQ. The short motif at 158–175 is the Bipartite nuclear localization signal element; the sequence is RRTPSPRRRRSQSPRRRR. A run of 2 repeats spans residues 162 to 169 and 170 to 177. The segment at 177–183 is RNA binding; it reads QSRESQC.

It belongs to the orthohepadnavirus core antigen family. As to quaternary structure, homodimerizes, then multimerizes. Interacts with cytosol exposed regions of viral L glycoprotein present in the reticulum-to-Golgi compartment. Interacts with human FLNB. Phosphorylated form interacts with host importin alpha; this interaction depends on the exposure of the NLS, which itself depends upon genome maturation and/or phosphorylation of the capsid protein. Interacts with host NUP153. In terms of processing, phosphorylated by host SRPK1, SRPK2, and maybe protein kinase C or GAPDH. Phosphorylation is critical for pregenomic RNA packaging. Protein kinase C phosphorylation is stimulated by HBx protein and may play a role in transport of the viral genome to the nucleus at the late step during the viral replication cycle.

The protein resides in the virion. It localises to the host cytoplasm. Its function is as follows. Self assembles to form an icosahedral capsid. Most capsids appear to be large particles with an icosahedral symmetry of T=4 and consist of 240 copies of capsid protein, though a fraction forms smaller T=3 particles consisting of 180 capsid proteins. Entering capsids are transported along microtubules to the nucleus. Phosphorylation of the capsid is thought to induce exposure of nuclear localization signal in the C-terminal portion of the capsid protein that allows binding to the nuclear pore complex via the importin (karyopherin-) alpha and beta. Capsids are imported in intact form through the nuclear pore into the nuclear basket, where it probably binds NUP153. Only capsids that contain the mature viral genome can release the viral DNA and capsid protein into the nucleoplasm. Immature capsids get stuck in the basket. Capsids encapsulate the pre-genomic RNA and the P protein. Pre-genomic RNA is reverse-transcribed into DNA while the capsid is still in the cytoplasm. The capsid can then either be directed to the nucleus, providing more genomes for transcription, or bud through the endoplasmic reticulum to provide new virions. The chain is Capsid protein from Homo sapiens (Human).